The primary structure comprises 573 residues: Proline--tRNA ligase (573 aa).

The protein belongs to the class-II aminoacyl-tRNA synthetase family. ProS type 1 subfamily. In terms of assembly, homodimer.

It is found in the cytoplasm. The enzyme catalyses tRNA(Pro) + L-proline + ATP = L-prolyl-tRNA(Pro) + AMP + diphosphate. Its function is as follows. Catalyzes the attachment of proline to tRNA(Pro) in a two-step reaction: proline is first activated by ATP to form Pro-AMP and then transferred to the acceptor end of tRNA(Pro). As ProRS can inadvertently accommodate and process non-cognate amino acids such as alanine and cysteine, to avoid such errors it has two additional distinct editing activities against alanine. One activity is designated as 'pretransfer' editing and involves the tRNA(Pro)-independent hydrolysis of activated Ala-AMP. The other activity is designated 'posttransfer' editing and involves deacylation of mischarged Ala-tRNA(Pro). The misacylated Cys-tRNA(Pro) is not edited by ProRS. This Citrifermentans bemidjiense (strain ATCC BAA-1014 / DSM 16622 / JCM 12645 / Bem) (Geobacter bemidjiensis) protein is Proline--tRNA ligase.